The primary structure comprises 1711 residues: Receptor-type tyrosine-protein phosphatase V (1711 aa).

Positions 1 to 17 (MRPLILLAALLWLQGFL) are cleaved as a signal peptide. Topologically, residues 18–1074 (AEDDACSSLE…SEPRASISLA (1057 aa)) are extracellular. 10 Fibronectin type-III domains span residues 37-129 (PLLS…TAPT), 130-222 (VVRG…VPPD), 218-305 (PVPP…EWTY), 306-391 (PSYP…LAES), 393-470 (ALPR…ISGY), 475-569 (PPQS…APPT), 565-654 (PAPP…TGWT), 655-749 (PPSA…IPNE), 744-831 (PLIP…VLSV), and 832-926 (EPGP…SAEA). N-linked (GlcNAc...) asparagine glycans are attached at residues N42, N74, N89, N117, N174, N239, and N259. N431 carries an N-linked (GlcNAc...) asparagine glycan. N-linked (GlcNAc...) asparagine glycosylation is found at N570, N620, N649, N663, and N737. Residues N851, N882, N970, and N982 are each glycosylated (N-linked (GlcNAc...) asparagine). The helical transmembrane segment at 1075 to 1095 (IIPLTVMLGAVVGSIVIVCAV) threads the bilayer. Residues 1096–1711 (LCLLRWRCLK…PRAGKWPAPC (616 aa)) lie on the Cytoplasmic side of the membrane. 2 consecutive Tyrosine-protein phosphatase domains span residues 1150-1409 (FFQE…LLNK) and 1427-1696 (DFAQ…LNSA). Substrate-binding positions include D1316, 1350–1356 (CSAGVGR), and Q1394. C1350 (phosphocysteine intermediate) is an active-site residue.

The protein belongs to the protein-tyrosine phosphatase family. Receptor class 3 subfamily. Post-translationally, the cytoplasmic domain contains potential phosphorylation sites. As to expression, bone and testis. In the latter, restricted to the basal portion of the seminiferous tubule.

Its subcellular location is the membrane. It carries out the reaction O-phospho-L-tyrosyl-[protein] + H2O = L-tyrosyl-[protein] + phosphate. Functionally, protein tyrosine phosphatase that acts as a regulator of energy metabolism. Prevents decarboxylation of osteocalcin (Bglap) via an indirect mechanism, preventing the hormone activity of osteocalcin. Functions in signaling pathways during bone remodeling, as well as serve a broader role in cell interactions associated with differentiation in bone and testis. Associated with differentiation in bone and testis. This is Receptor-type tyrosine-protein phosphatase V (Ptprv) from Rattus norvegicus (Rat).